The primary structure comprises 215 residues: Ribulose-phosphate 3-epimerase (215 aa).

Ser-13 provides a ligand contact to substrate. 4 residues coordinate a divalent metal cation: His-38, Asp-40, His-69, and Asp-175. The active-site Proton acceptor is the Asp-40. Residues His-69, 175–177 (DGG), and 196–197 (GS) each bind substrate. The Proton donor role is filled by Asp-175.

This sequence belongs to the ribulose-phosphate 3-epimerase family. A divalent metal cation is required as a cofactor.

The enzyme catalyses D-ribulose 5-phosphate = D-xylulose 5-phosphate. Its pathway is carbohydrate degradation. Functionally, catalyzes the reversible epimerization of D-ribulose 5-phosphate to D-xylulose 5-phosphate. This Mycoplasma pneumoniae (strain ATCC 29342 / M129 / Subtype 1) (Mycoplasmoides pneumoniae) protein is Ribulose-phosphate 3-epimerase.